Consider the following 391-residue polypeptide: Septation protein etd1 (391 aa).

Residues 49–68 (MKSYGSDITPRRPKQLGLPK) form a disordered region.

Its function is as follows. Involved in septation. This is Septation protein etd1 (etd1) from Schizosaccharomyces pombe (strain 972 / ATCC 24843) (Fission yeast).